The chain runs to 493 residues: Cytoplasmic tRNA 2-thiolation protein 2 (493 aa).

At S489 the chain carries Phosphoserine.

It belongs to the CTU2/NCS2 family. As to quaternary structure, interacts with NCS6 and URM1. May act by forming a heterodimer with NCS6.

It localises to the cytoplasm. Its pathway is tRNA modification; 5-methoxycarbonylmethyl-2-thiouridine-tRNA biosynthesis. In terms of biological role, plays a central role in 2-thiolation of mcm(5)S(2)U at tRNA wobble positions of tRNA(Lys), tRNA(Glu) and tRNA(Gln). May act by forming a heterodimer with NCS6 that ligates sulfur from thiocarboxylated URM1 onto the uridine of tRNAs at wobble position. Prior mcm(5) tRNA modification by the elongator complex is required for 2-thiolation. May also be involved in protein urmylation and in invasive and pseudohyphal growth. Inhibits replication of Brome mosaic virus. The sequence is that of Cytoplasmic tRNA 2-thiolation protein 2 from Saccharomyces cerevisiae (strain ATCC 204508 / S288c) (Baker's yeast).